The chain runs to 580 residues: Frizzled and smoothened-like protein K (580 aa).

An N-terminal signal peptide occupies residues 1 to 18; the sequence is MRVLFILFLFYFYTYTEA. At 19–236 the chain is on the extracellular side; sequence QQYYPIDPTG…QWDNIFDTSD (218 aa). The 130-residue stretch at 25–154 folds into the FZ domain; that stretch reads DPTGKCEQYI…SSDYNLTTYG (130 aa). Asparagine 52, asparagine 97, asparagine 149, asparagine 170, and asparagine 186 each carry an N-linked (GlcNAc...) asparagine glycan. The chain crosses the membrane as a helical span at residues 237–257; that stretch reads AISLVSLLCSVYLFITYMVIN. Residues 258 to 264 lie on the Cytoplasmic side of the membrane; the sequence is PKRNKYD. Residues 265–285 traverse the membrane as a helical segment; that stretch reads YFFSFFVLSIILMSIAGTIGF. Over 286-308 the chain is Extracellular; it reads SVGGTRKLLCPEINRRGVYTDPA. A helical transmembrane segment spans residues 309–329; that stretch reads VAAAGWIFQFAIINAILWFSI. Over 330–349 the chain is Cytoplasmic; it reads NSFELWFQIKFIKRKLHLIK. A helical membrane pass occupies residues 350-370; it reads FYILAVLVISIALSVPLSAIG. The Extracellular portion of the chain corresponds to 371-391; the sequence is EFNAGLGNFVVWIESGKYQNW. Residues 392–412 traverse the membrane as a helical segment; the sequence is FFWGPLGIVLTVGTTFIGLVI. Residues 413–434 are Cytoplasmic-facing; that stretch reads WEIYKIVSSTNKSDFFKLQLKP. Residues 435–455 traverse the membrane as a helical segment; that stretch reads LMNMLLIYLTFVYLFGYNFYI. The Extracellular segment spans residues 456–490; it reads HNSLNGFYGSSEEFKNCIISTDGKDCRIQGPPYSS. Residues 491–511 traverse the membrane as a helical segment; that stretch reads ILMFVFCLRIYGVYCIALYGF. The Cytoplasmic portion of the chain corresponds to 512–580; that stretch reads SPKTRSIWSN…SMEPDEIILR (69 aa). A Lys-Thr-X-X-X-Trp motif, mediates interaction with the PDZ domain of Dvl family members motif is present at residues 514–519; the sequence is KTRSIW. Positions 542-580 are disordered; sequence TTKGGTSSTDIKMSTNNNSNMDSGGGKSSSMEPDEIILR. A compositionally biased stretch (polar residues) spans 551–563; that stretch reads DIKMSTNNNSNMD.

Belongs to the G-protein coupled receptor Fz/Smo family.

The protein localises to the membrane. The chain is Frizzled and smoothened-like protein K (fslK) from Dictyostelium discoideum (Social amoeba).